The sequence spans 114 residues: uncharacterized protein (114 aa).

This is an uncharacterized protein from Sputnik virophage.